The primary structure comprises 184 residues: Phosphonoformate cytidylyltransferase (184 aa).

The catalysed reaction is phosphonoformate + CTP = CMP-5'-phosphonoformate + diphosphate. It functions in the pathway secondary metabolite biosynthesis; bialaphos biosynthesis. Functionally, catalyzes the displacement of the beta- and gamma-phosphates of CTP by phosphonoformate to produce CMP-5'-phosphonoformate, an intermediate in the biosynthesis of phosphinothricin tripeptide (PTT), also known as bialaphos (BA), a natural-product antibiotic and potent herbicide. This chain is Phosphonoformate cytidylyltransferase, found in Streptomyces viridochromogenes (strain DSM 40736 / JCM 4977 / BCRC 1201 / Tue 494).